The primary structure comprises 31 residues: Kalata-B9 (31 aa).

The cyclopeptide (Gly-Asp) cross-link spans 1-31; sequence GSVFNCGETCVLGTCYTPGCTCNTYRVCTKD. Disulfide bonds link cysteine 6/cysteine 20, cysteine 10/cysteine 22, and cysteine 15/cysteine 28.

This sequence belongs to the cyclotide family. Bracelet subfamily. Post-translationally, this peptide occurs in both cyclic and linear forms.

Probably participates in a plant defense mechanism. This chain is Kalata-B9, found in Oldenlandia affinis.